The sequence spans 220 residues: Cytidylate kinase (220 aa).

10–18 (GPASSGKST) is an ATP binding site.

Belongs to the cytidylate kinase family. Type 1 subfamily.

The protein resides in the cytoplasm. It carries out the reaction CMP + ATP = CDP + ADP. The enzyme catalyses dCMP + ATP = dCDP + ADP. The protein is Cytidylate kinase of Lactococcus lactis subsp. lactis (strain IL1403) (Streptococcus lactis).